The primary structure comprises 713 residues: Polyribonucleotide nucleotidyltransferase (713 aa).

Mg(2+) is bound by residues aspartate 495 and aspartate 501. One can recognise a KH domain in the interval 562-621 (PRLLTLKIPVDMIGLVIGPGGKTIKRIVEETGAKVDIEDDGTVVVSSIDGAKALAAKQII). In terms of domain architecture, S1 motif spans 631 to 700 (DKVYLGTVTR…QKGRINLTRR (70 aa)).

It belongs to the polyribonucleotide nucleotidyltransferase family. The cofactor is Mg(2+).

It localises to the cytoplasm. The catalysed reaction is RNA(n+1) + phosphate = RNA(n) + a ribonucleoside 5'-diphosphate. Involved in mRNA degradation. Catalyzes the phosphorolysis of single-stranded polyribonucleotides processively in the 3'- to 5'-direction. The sequence is that of Polyribonucleotide nucleotidyltransferase from Gloeobacter violaceus (strain ATCC 29082 / PCC 7421).